The chain runs to 288 residues: Pyridoxal kinase PdxY (288 aa).

Substrate is bound by residues Ser9 and 44 to 45 (TQ). Positions 111, 148, and 181 each coordinate ATP. Asp224 contributes to the substrate binding site.

Belongs to the pyridoxine kinase family. PdxY subfamily. Homodimer. Mg(2+) serves as cofactor.

The catalysed reaction is pyridoxal + ATP = pyridoxal 5'-phosphate + ADP + H(+). The protein operates within cofactor metabolism; pyridoxal 5'-phosphate salvage; pyridoxal 5'-phosphate from pyridoxal: step 1/1. In terms of biological role, pyridoxal kinase involved in the salvage pathway of pyridoxal 5'-phosphate (PLP). Catalyzes the phosphorylation of pyridoxal to PLP. The polypeptide is Pyridoxal kinase PdxY (Haemophilus influenzae (strain ATCC 51907 / DSM 11121 / KW20 / Rd)).